We begin with the raw amino-acid sequence, 729 residues long: Golgin subfamily A member 5 (729 aa).

Serine 2 bears the N-acetylserine mark. Residues 2-696 (SWFADLAGRA…IFLRRYPIAR (695 aa)) lie on the Cytoplasmic side of the membrane. Arginine 27 and arginine 89 each carry dimethylated arginine. 2 disordered regions span residues 89–222 (RTVG…SQEL) and 626–645 (SASS…VDSG). Residue serine 116 is modified to Phosphoserine. Residues 134–146 (PTGRVEVKKEKGR) are compositionally biased toward basic and acidic residues. Residues 148 to 167 (PVSPSSPSGVSSVNTSVTTT) show a composition bias toward low complexity. Composition is skewed to polar residues over residues 175 to 186 (GSQSPGVNSSDS) and 626 to 638 (SASS…SAIN). Residues 215–629 (GSSRSQELSN…LEQQVHSASS (415 aa)) are a coiled coil. A helical; Anchor for type IV membrane protein transmembrane segment spans residues 697–717 (VFVIIYMALLHLWVMIVLLTY). Residues 718–729 (SPEMHHDQPYGK) lie on the Lumenal side of the membrane.

As to quaternary structure, homodimer. Interacts with RAB1A that has been activated by GTP-binding. Interacts with isoform CASP of CUX1. Post-translationally, highly phosphorylated during mitosis. Phosphorylation is barely detectable during interphase.

Its subcellular location is the golgi apparatus membrane. Involved in maintaining Golgi structure. Stimulates the formation of Golgi stacks and ribbons. Involved in intra-Golgi retrograde transport. This chain is Golgin subfamily A member 5 (Golga5), found in Mus musculus (Mouse).